A 425-amino-acid polypeptide reads, in one-letter code: Glutamyl-tRNA reductase (425 aa).

Substrate-binding positions include 49–52 (TCNR), Ser107, 112–114 (EPQ), and Gln118. Residue Cys50 is the Nucleophile of the active site. Residue 187 to 192 (GAGETI) participates in NADP(+) binding.

It belongs to the glutamyl-tRNA reductase family. In terms of assembly, homodimer.

It carries out the reaction (S)-4-amino-5-oxopentanoate + tRNA(Glu) + NADP(+) = L-glutamyl-tRNA(Glu) + NADPH + H(+). Its pathway is porphyrin-containing compound metabolism; protoporphyrin-IX biosynthesis; 5-aminolevulinate from L-glutamyl-tRNA(Glu): step 1/2. In terms of biological role, catalyzes the NADPH-dependent reduction of glutamyl-tRNA(Glu) to glutamate 1-semialdehyde (GSA). The polypeptide is Glutamyl-tRNA reductase (Pseudomonas savastanoi pv. phaseolicola (strain 1448A / Race 6) (Pseudomonas syringae pv. phaseolicola (strain 1448A / Race 6))).